A 129-amino-acid chain; its full sequence is Fluoride-specific ion channel FluC 2 (129 aa).

The next 4 membrane-spanning stretches (helical) occupy residues 4 to 24, 39 to 59, 65 to 85, and 100 to 120; these read LDVMWVGLGGGVGSLGRWWIG, TFLINISGAFVIGYLSVLFGV, YGTMLNAGVLTGILGGYTTFS, and GGLAVFYLVASVLSGLFAAWL. Na(+) contacts are provided by glycine 79 and threonine 82.

It belongs to the fluoride channel Fluc/FEX (TC 1.A.43) family.

Its subcellular location is the cell inner membrane. It catalyses the reaction fluoride(in) = fluoride(out). Na(+) is not transported, but it plays an essential structural role and its presence is essential for fluoride channel function. In terms of biological role, fluoride-specific ion channel. Important for reducing fluoride concentration in the cell, thus reducing its toxicity. This is Fluoride-specific ion channel FluC 2 from Brucella suis biovar 1 (strain 1330).